The primary structure comprises 359 residues: Peptide chain release factor 1 (359 aa).

Gln235 is modified (N5-methylglutamine).

The protein belongs to the prokaryotic/mitochondrial release factor family. In terms of processing, methylated by PrmC. Methylation increases the termination efficiency of RF1.

It localises to the cytoplasm. In terms of biological role, peptide chain release factor 1 directs the termination of translation in response to the peptide chain termination codons UAG and UAA. The sequence is that of Peptide chain release factor 1 from Chelativorans sp. (strain BNC1).